The primary structure comprises 372 residues: MNKKDYYDLLEVSRNASTDEIKKAYKKLALKYHPDRNPGNKEAEEKFKEVTAAYEVLSDSEKRAGYDRYGHDGASGGFDFSQAGGDFSDIFNDFFGGGFGGSTSRSRTKRSTTGVSGADLRYDLKITLEDAFKGIQAPIHYVTNIKCNTCQGTGSEGAIKPVQCNTCQGSGRIRTQQGFFTIERTCTTCYGEGEIIQNKCKKCGGSGRKRDEVNISVSIPKGIEEGAKVRVSGKGEAGARGGKSGDLYVCVKIATHQIFTRNRADLHCKVPIRMTLAVLGGEIDIQSIDGAKIKVKVPEGTQTGTKLRCREKGMPYMNSHARGDLYVQVIVETLNPKNLTQKQIELLKALEEEEHESVEQKSEGFFGKVKKK.

One can recognise a J domain in the interval 5-70 (DYYDLLEVSR…EKRAGYDRYG (66 aa)). The segment at 134 to 212 (GIQAPIHYVT…CGGSGRKRDE (79 aa)) adopts a CR-type zinc-finger fold. Zn(2+)-binding residues include cysteine 147, cysteine 150, cysteine 164, cysteine 167, cysteine 186, cysteine 189, cysteine 200, and cysteine 203. 4 CXXCXGXG motif repeats span residues 147–154 (CNTCQGTG), 164–171 (CNTCQGSG), 186–193 (CTTCYGEG), and 200–207 (CKKCGGSG).

Belongs to the DnaJ family. Homodimer. Zn(2+) serves as cofactor.

The protein localises to the cytoplasm. In terms of biological role, participates actively in the response to hyperosmotic and heat shock by preventing the aggregation of stress-denatured proteins and by disaggregating proteins, also in an autonomous, DnaK-independent fashion. Unfolded proteins bind initially to DnaJ; upon interaction with the DnaJ-bound protein, DnaK hydrolyzes its bound ATP, resulting in the formation of a stable complex. GrpE releases ADP from DnaK; ATP binding to DnaK triggers the release of the substrate protein, thus completing the reaction cycle. Several rounds of ATP-dependent interactions between DnaJ, DnaK and GrpE are required for fully efficient folding. Also involved, together with DnaK and GrpE, in the DNA replication of plasmids through activation of initiation proteins. The sequence is that of Chaperone protein DnaJ from Wolbachia pipientis subsp. Culex pipiens (strain wPip).